The primary structure comprises 585 residues: Glucose oxidase-like protein fsoC (585 aa).

A104 contributes to the FAD binding site. The active-site Proton donor is H521. Catalysis depends on H564, which acts as the Proton acceptor.

This sequence belongs to the GMC oxidoreductase family. Monomer. It depends on FAD as a cofactor.

Glucose oxidase-like protein; part of the gene cluster that mediates the biosynthesis of the enfumafungin-type antibiotic fuscoatroside. Four enzymes are sufficient to produce fuscoatroside: the terpene cyclase-glycosyl transferase fusion protein fsoAthe cytochrome P450 monoxygenases fsoD and fsoE, and the acetyltransferase fsoF; the cytochrome P450 monooxygenase fsoB and the glucose oxidase-like protein fsoC do not seem to play a role in biosynthesis of fuscoatroside. Its function is as follows. Glucose oxidase; part of the gene cluster that mediates the biosynthesis of the enfumafungin-type antibiotic, fuscoatroside. The polypeptide is Glucose oxidase-like protein fsoC (Humicola fuscoatra).